Here is a 336-residue protein sequence, read N- to C-terminus: Uroporphyrinogen decarboxylase (336 aa).

Substrate-binding positions include 24–28 (RQVGR), Asp-73, Tyr-142, Ser-197, and His-312.

Belongs to the uroporphyrinogen decarboxylase family. Homodimer.

Its subcellular location is the cytoplasm. It catalyses the reaction uroporphyrinogen III + 4 H(+) = coproporphyrinogen III + 4 CO2. It functions in the pathway porphyrin-containing compound metabolism; protoporphyrin-IX biosynthesis; coproporphyrinogen-III from 5-aminolevulinate: step 4/4. Its function is as follows. Catalyzes the decarboxylation of four acetate groups of uroporphyrinogen-III to yield coproporphyrinogen-III. This chain is Uroporphyrinogen decarboxylase, found in Chlamydia trachomatis serovar L2 (strain ATCC VR-902B / DSM 19102 / 434/Bu).